Reading from the N-terminus, the 447-residue chain is Exodeoxyribonuclease 7 large subunit (447 aa).

This sequence belongs to the XseA family. In terms of assembly, heterooligomer composed of large and small subunits.

It is found in the cytoplasm. It carries out the reaction Exonucleolytic cleavage in either 5'- to 3'- or 3'- to 5'-direction to yield nucleoside 5'-phosphates.. Its function is as follows. Bidirectionally degrades single-stranded DNA into large acid-insoluble oligonucleotides, which are then degraded further into small acid-soluble oligonucleotides. In Exiguobacterium sibiricum (strain DSM 17290 / CCUG 55495 / CIP 109462 / JCM 13490 / 255-15), this protein is Exodeoxyribonuclease 7 large subunit.